The primary structure comprises 329 residues: Sex comb on midleg-like protein 1 (329 aa).

A phosphoserine mark is found at serine 138 and serine 238. The segment at serine 138–proline 157 is disordered. Residues tryptophan 258 to lysine 325 enclose the SAM domain.

This sequence belongs to the SCM family.

Its subcellular location is the nucleus. Putative Polycomb group (PcG) protein. PcG proteins act by forming multiprotein complexes, which are required to maintain the transcriptionally repressive state of homeotic genes throughout development. May be involved in spermatogenesis during sexual maturation. The sequence is that of Sex comb on midleg-like protein 1 (SCML1) from Pan troglodytes (Chimpanzee).